The following is a 57-amino-acid chain: MPAIQPPLYLTFLLLMLLYRIITLYVWSLSTITYKTSVRHASLYQRSFFRWSVDHSL.

Over 1-8 (MPAIQPPL) the chain is Virion surface. A helical membrane pass occupies residues 9–29 (YLTFLLLMLLYRIITLYVWSL). Over 30–57 (STITYKTSVRHASLYQRSFFRWSVDHSL) the chain is Intravirion.

It belongs to the rubulavirus small hydrophobic protein family. Interacts with host TNFRSF1A, RIPK1 and IRAK1; these interactions interfere with host NF-kappa-B activation at the level of receptor complexes. Interacts with host protein UBQLN4.

It localises to the virion membrane. Its subcellular location is the host cell membrane. Plays a role in the inhibition of the host NF-kappa-B pathway. This inhibition occurs at the receptor level, by preventing the signaling of TNFR1 as well as IL-1R and TLR3. This chain is Small hydrophobic protein (SH), found in Mumps virus (strain Edingburgh 4) (MuV).